Reading from the N-terminus, the 255-residue chain is MRVDLNSDLGESFGRYKLGLDEEVMKYITSANVACGWHAGDPLVMRKTVRLAKENDVQVGAHPGYPDLMGFGRRYMKLTPEEARNYILYQVGALYAFAKAEGLELQHVKPHGALYNAMVKEEDLARAVIEGILDFDKDLILVTLSNSRVADIAEEMGLKVAHEVFADRAYNPDGTLVPRGRPGAVIEDKEEIAERVISMVKDGGIRAINGEWVDLKVDTICVHGDNPKAVEITSYIRKVLEEEGVKIVPMKEFIR.

It belongs to the LamB/PxpA family. Forms a complex composed of PxpA, PxpB and PxpC.

It catalyses the reaction 5-oxo-L-proline + ATP + 2 H2O = L-glutamate + ADP + phosphate + H(+). Catalyzes the cleavage of 5-oxoproline to form L-glutamate coupled to the hydrolysis of ATP to ADP and inorganic phosphate. The protein is 5-oxoprolinase subunit A of Pyrococcus horikoshii (strain ATCC 700860 / DSM 12428 / JCM 9974 / NBRC 100139 / OT-3).